Here is a 446-residue protein sequence, read N- to C-terminus: Glutamine synthetase (446 aa).

The GS beta-grasp domain occupies 14-107 (NNVKFLRFQF…IICDVYRKNG (94 aa)). The GS catalytic domain maps to 114–446 (PRGCLKRVLA…DWEFNKYVRI (333 aa)). Mg(2+) is bound by residues glutamate 138 and glutamate 140. Glutamate 187 serves as a coordination point for ATP. Mg(2+) is bound by residues glutamate 192 and glutamate 199. L-glutamate contacts are provided by residues 243–244 (NG) and glycine 244. Histidine 248 lines the Mg(2+) pocket. An ATP-binding site is contributed by serine 252. L-glutamate is bound by residues arginine 301, glutamate 307, and arginine 319. ATP contacts are provided by arginine 319, arginine 324, and lysine 331. Glutamate 336 serves as a coordination point for Mg(2+). Arginine 338 is a binding site for L-glutamate.

It belongs to the glutamine synthetase family. As to quaternary structure, oligomer of 12 subunits arranged in the form of two hexagons. Requires Mg(2+) as cofactor.

It is found in the cytoplasm. It carries out the reaction L-glutamate + NH4(+) + ATP = L-glutamine + ADP + phosphate + H(+). In terms of biological role, probably involved in nitrogen metabolism via ammonium assimilation. Catalyzes the ATP-dependent biosynthesis of glutamine from glutamate and ammonia. This chain is Glutamine synthetase, found in Methanococcus voltae.